The primary structure comprises 323 residues: Mitochondrial glutamate carrier 1 (323 aa).

Solcar repeat units lie at residues 6–93 (ISLP…FRHQ), 101–214 (LTLP…LNQL), and 223–312 (SPFY…GIAE). A run of 6 helical transmembrane segments spans residues 12 to 32 (LINGGIAGLIGVTCVFPIDLA), 62 to 82 (YFGMYRGAAVNLTLVTPEKAI), 107 to 127 (MLAGCGAGTCQVIVTTPMEML), 189 to 209 (GLGATLLRDVPFSIVYFPLFA), 223 to 243 (SPFYVSFLAGCVAGSAAAVAV), and 292 to 312 (ALVIAPLFGIAQVVYFLGIAE).

This sequence belongs to the mitochondrial carrier (TC 2.A.29) family. As to expression, detected in insulin-secreting beta-cells and pancreatic islets (at the protein level).

The protein localises to the mitochondrion inner membrane. The catalysed reaction is L-glutamate(in) + H(+)(in) = L-glutamate(out) + H(+)(out). Its function is as follows. Mitochondrial glutamate/H(+) symporter. Responsible for the transport of glutamate from the cytosol into the mitochondrial matrix with the concomitant import of a proton. Plays a role in the control of glucose-stimulated insulin secretion. This is Mitochondrial glutamate carrier 1 from Rattus norvegicus (Rat).